A 412-amino-acid chain; its full sequence is Membrane fusion protein MtrC (412 aa).

Residues 1 to 24 (MAFYASKAMRAAALAAAVALALSS) form the signal peptide. A lipid anchor (N-palmitoyl cysteine) is attached at C25. C25 carries S-diacylglycerol cysteine lipidation. Residues 377 to 412 (AKKVTPKEWAPSENQAAAPQAGVQTASEAKPASEAK) are disordered. The segment covering 388–403 (SENQAAAPQAGVQTAS) has biased composition (polar residues).

Belongs to the membrane fusion protein (MFP) (TC 8.A.1) family.

It localises to the cell inner membrane. Its function is as follows. Cell membrane lipoprotein, involved in cell membrane permeability to hydrophobic compounds such as antibiotics, dyes and detergents. This chain is Membrane fusion protein MtrC (mtrC), found in Neisseria gonorrhoeae.